The sequence spans 236 residues: Proteasome subunit alpha (236 aa).

This sequence belongs to the peptidase T1A family. As to quaternary structure, the 20S proteasome core is composed of 14 alpha and 14 beta subunits that assemble into four stacked heptameric rings, resulting in a barrel-shaped structure. The two inner rings, each composed of seven catalytic beta subunits, are sandwiched by two outer rings, each composed of seven alpha subunits. The catalytic chamber with the active sites is on the inside of the barrel. Has a gated structure, the ends of the cylinder being occluded by the N-termini of the alpha-subunits. Is capped by the proteasome-associated ATPase, ARC.

The protein resides in the cytoplasm. The protein operates within protein degradation; proteasomal Pup-dependent pathway. The formation of the proteasomal ATPase ARC-20S proteasome complex, likely via the docking of the C-termini of ARC into the intersubunit pockets in the alpha-rings, may trigger opening of the gate for substrate entry. Interconversion between the open-gate and close-gate conformations leads to a dynamic regulation of the 20S proteasome proteolysis activity. Functionally, component of the proteasome core, a large protease complex with broad specificity involved in protein degradation. This Pseudarthrobacter chlorophenolicus (strain ATCC 700700 / DSM 12829 / CIP 107037 / JCM 12360 / KCTC 9906 / NCIMB 13794 / A6) (Arthrobacter chlorophenolicus) protein is Proteasome subunit alpha.